We begin with the raw amino-acid sequence, 171 residues long: Iron-sulfur cluster assembly protein 3 (171 aa).

Residues 1 to 49 (MLRQTTKRAFLGLASQNPTPFPVVSRLYHPNVIDHYDNPRNVGSFDKND) constitute a mitochondrion transit peptide.

The protein belongs to the NifU family. Component of the core Fe-S cluster (ISC) assembly machinery. Requires [2Fe-2S] cluster as cofactor. As to expression, mostly expressed in flowers and pollen, and, to a lower extent, in leaves and roots.

Its subcellular location is the mitochondrion matrix. It participates in cofactor biosynthesis; iron-sulfur cluster biosynthesis. Scaffold protein for the de novo synthesis of iron-sulfur (Fe-S) clusters within mitochondria, which is required for maturation of both mitochondrial and cytoplasmic [2Fe-2S] and [4Fe-4S] proteins. First, a [2Fe-2S] cluster is transiently assembled on the scaffold protein ISCU (ISU1, ISU2 or ISU3). In a second step, the cluster is released from ISCU, transferred to a glutaredoxin, followed by the formation of mitochondrial [2Fe-2S] proteins, the synthesis of [4Fe-4S] clusters and their target-specific insertion into the recipient apoproteins. Cluster assembly on ISCU depends on the function of the cysteine desulfurase complex NFS1-ISD11, which serves as the sulfur donor for cluster synthesis, the iron-binding protein frataxin as the putative iron donor, and the electron transfer chain comprised of ferredoxin reductase and ferredoxin, which receive their electrons from NADH. The sequence is that of Iron-sulfur cluster assembly protein 3 (ISU3) from Arabidopsis thaliana (Mouse-ear cress).